The chain runs to 399 residues: 4-hydroxy-3-methylbut-2-enyl diphosphate reductase (399 aa).

Residue Cys-66 participates in [4Fe-4S] cluster binding. Residue His-96 coordinates (2E)-4-hydroxy-3-methylbut-2-enyl diphosphate. Residue His-96 coordinates dimethylallyl diphosphate. Isopentenyl diphosphate is bound at residue His-96. Residue Cys-157 coordinates [4Fe-4S] cluster. His-185 contributes to the (2E)-4-hydroxy-3-methylbut-2-enyl diphosphate binding site. Dimethylallyl diphosphate is bound at residue His-185. Position 185 (His-185) interacts with isopentenyl diphosphate. Glu-187 (proton donor) is an active-site residue. Position 250 (Thr-250) interacts with (2E)-4-hydroxy-3-methylbut-2-enyl diphosphate. Cys-288 lines the [4Fe-4S] cluster pocket. Residues Ser-317, Ser-318, Asn-319, and Ser-380 each contribute to the (2E)-4-hydroxy-3-methylbut-2-enyl diphosphate site. The dimethylallyl diphosphate site is built by Ser-317, Ser-318, Asn-319, and Ser-380. Ser-317, Ser-318, Asn-319, and Ser-380 together coordinate isopentenyl diphosphate.

Belongs to the IspH family. The cofactor is [4Fe-4S] cluster.

It catalyses the reaction isopentenyl diphosphate + 2 oxidized [2Fe-2S]-[ferredoxin] + H2O = (2E)-4-hydroxy-3-methylbut-2-enyl diphosphate + 2 reduced [2Fe-2S]-[ferredoxin] + 2 H(+). The enzyme catalyses dimethylallyl diphosphate + 2 oxidized [2Fe-2S]-[ferredoxin] + H2O = (2E)-4-hydroxy-3-methylbut-2-enyl diphosphate + 2 reduced [2Fe-2S]-[ferredoxin] + 2 H(+). It functions in the pathway isoprenoid biosynthesis; dimethylallyl diphosphate biosynthesis; dimethylallyl diphosphate from (2E)-4-hydroxy-3-methylbutenyl diphosphate: step 1/1. The protein operates within isoprenoid biosynthesis; isopentenyl diphosphate biosynthesis via DXP pathway; isopentenyl diphosphate from 1-deoxy-D-xylulose 5-phosphate: step 6/6. Functionally, catalyzes the conversion of 1-hydroxy-2-methyl-2-(E)-butenyl 4-diphosphate (HMBPP) into a mixture of isopentenyl diphosphate (IPP) and dimethylallyl diphosphate (DMAPP). Acts in the terminal step of the DOXP/MEP pathway for isoprenoid precursor biosynthesis. In Synechococcus sp. (strain CC9902), this protein is 4-hydroxy-3-methylbut-2-enyl diphosphate reductase.